Here is a 1695-residue protein sequence, read N- to C-terminus: Sialoadhesin (1695 aa).

The signal sequence occupies residues 1 to 19 (MCVLFSLLLLASVFSLGQT). In terms of domain architecture, Ig-like V-type spans 20 to 136 (TWGVSSPKNV…DVKGTTVTVT (117 aa)). At 20–1639 (TWGVSSPKNV…ALHQLQLFQR (1620 aa)) the chain is on the extracellular side. Cystine bridges form between C36–C166, C41–C98, C160–C218, and C263–C306. N-acetylneuraminate is bound by residues Y63, R116, and 122-126 (SNRWL). Ig-like C2-type domains are found at residues 153–235 (GMER…YLQV), 239–321 (PKGV…SPLS), 326–406 (MAEV…SPLS), 416–508 (PDLT…LDFY), 509–594 (ANVA…TVLT), 602–701 (PTFT…ASFN), 704–781 (ATVL…AQLS), 795–890 (PKLS…FQVR), 894–973 (VQVS…APVS), 980–1079 (PRHV…ADFD), 1081–1161 (QAVR…RPVT), 1172–1264 (RLTY…MNPS), 1245–1337 (KANT…ASLQ), 1342–1439 (PRDA…RLLT), 1442–1520 (DIRV…ATTS), and 1534–1627 (PTLI…AYFG). N-linked (GlcNAc...) asparagine glycosylation occurs at N159. N266, N299, and N340 each carry an N-linked (GlcNAc...) asparagine glycan. 2 cysteine pairs are disulfide-bonded: C347–C391 and C434–C492. N500 carries an N-linked (GlcNAc...) asparagine glycan. The cysteines at positions 532 and 576 are disulfide-linked. N583 carries N-linked (GlcNAc...) asparagine glycosylation. A disulfide bridge connects residues C625 and C685. N-linked (GlcNAc...) asparagine glycosylation is found at N693, N722, and N737. 2 disulfides stabilise this stretch: C725–C770 and C813–C872. Residues 827–829 (RGD) carry the Cell attachment site motif. A glycan (N-linked (GlcNAc...) asparagine) is linked at N882. 2 cysteine pairs are disulfide-bonded: C912/C956 and C1001/C1063. N-linked (GlcNAc...) asparagine glycosylation is found at N1090 and N1100. 2 cysteine pairs are disulfide-bonded: C1103–C1145 and C1189–C1237. A glycan (N-linked (GlcNAc...) asparagine) is linked at N1247. Disulfide bonds link C1277–C1320 and C1363–C1422. 2 N-linked (GlcNAc...) asparagine glycosylation sites follow: N1460 and N1474. Disulfide bonds link C1463/C1509 and C1552/C1611. The chain crosses the membrane as a helical span at residues 1640-1660 (LLWVLGFLAGFLCLLLGLVAY). The Cytoplasmic portion of the chain corresponds to 1661–1695 (HTWRKKSSTKLNEDENSAEMATKKNTIQEEVVAAL).

It belongs to the immunoglobulin superfamily. SIGLEC (sialic acid binding Ig-like lectin) family. As to quaternary structure, interacts with CLEC10A. As to expression, detected in lymph node in the subcapsular sinus, interfollicular regions, and T and B-cell boundary (at protein level). Expressed by macrophages in various tissues. Highest expression in spleen and lymph node with lower amounts in lung, liver, bone marrow, heart and skin. No expression in thymus, kidney, brain or small intestine.

It localises to the cell membrane. Its subcellular location is the secreted. Macrophage-restricted adhesion molecule that mediates sialic-acid dependent binding to lymphocytes, including granulocytes, monocytes, natural killer cells, B-cells and CD8 T-cells. Plays a crucial role in limiting bacterial dissemination by engaging sialylated bacteria to promote effective phagocytosis and antigen presentation for the adaptive immune response. Mediates the uptake of various enveloped viruses via sialic acid recognition and subsequently induces the formation of intracellular compartments filled with virions (VCCs). In turn, enhances macrophage-to-T-cell transmission of several viruses including murine leukemia virus. Acts as an endocytic receptor mediating clathrin dependent endocytosis. Preferentially binds to alpha-2,3-linked sialic acid. Binds to SPN/CD43 on T-cells. May play a role in hemopoiesis. Plays a role in the inhibition of antiviral innate immune by promoting TBK1 degradation via TYROBP and TRIM27-mediated ubiquitination. In Mus musculus (Mouse), this protein is Sialoadhesin (Siglec1).